A 67-amino-acid polypeptide reads, in one-letter code: Probable Sec-independent protein translocase protein TatE (67 aa).

The helical transmembrane segment at 1–21 threads the bilayer; sequence MEGISLAKLLIVGALIVLLFG. A disordered region spans residues 43 to 67; it reads MNDDSDATSKTASEDKNAGQAVHKE. Residues 54–67 are compositionally biased toward basic and acidic residues; that stretch reads ASEDKNAGQAVHKE.

The protein belongs to the TatA/E family. TatE subfamily.

Its subcellular location is the cell inner membrane. Functionally, part of the twin-arginine translocation (Tat) system that transports large folded proteins containing a characteristic twin-arginine motif in their signal peptide across membranes. TatE shares overlapping functions with TatA. The polypeptide is Probable Sec-independent protein translocase protein TatE (Erwinia tasmaniensis (strain DSM 17950 / CFBP 7177 / CIP 109463 / NCPPB 4357 / Et1/99)).